Here is a 321-residue protein sequence, read N- to C-terminus: Cysteine and histidine-rich domain-containing protein 1 (321 aa).

Positions 9, 14, 28, 31, 46, 47, 63, 68, 152, 157, 170, 173, 188, 189, 205, and 210 each coordinate Zn(2+). CHORD domains are found at residues 9-68 and 152-210; these read CYHK…RGKH and CRNN…SGEH. One can recognise a CS domain in the interval 218–308; sequence VSKFREDWFS…KHGTGWPRLK (91 aa).

Its function is as follows. Regulates centrosome duplication. Controls the secretion of the tyrosine kinase receptor let-23/EGFR from the endoplasmic reticulum and is required for the localization of let-23/EGFR to the plasma membrane of vulval precursor cells. It thus plays a role in positively regulating let/EGFR signaling, and anchor cell and vulval precursor cell alignment. Plays a role in vulval development and morphogenesis. This chain is Cysteine and histidine-rich domain-containing protein 1, found in Caenorhabditis elegans.